Consider the following 403-residue polypeptide: JmjC domain-containing histone demethylation protein 1 (403 aa).

The region spanning 141-328 is the JmjC domain; sequence WSLREWCNYF…QQLKIVDVEK (188 aa). Position 221 (threonine 221) interacts with substrate. Histidine 224 and aspartate 226 together coordinate Fe cation. Lysine 241 is a binding site for substrate. Histidine 296 is a binding site for Fe cation.

The protein belongs to the JHDM1 histone demethylase family. It depends on Fe(2+) as a cofactor.

The protein localises to the nucleus. The enzyme catalyses N(6),N(6)-dimethyl-L-lysyl(36)-[histone H3] + 2 2-oxoglutarate + 2 O2 = L-lysyl(36)-[histone H3] + 2 formaldehyde + 2 succinate + 2 CO2. Functionally, histone demethylase that specifically demethylates 'Lys-36' of histone H3, thereby playing a central role in histone code. The polypeptide is JmjC domain-containing histone demethylation protein 1 (JHD1) (Candida glabrata (strain ATCC 2001 / BCRC 20586 / JCM 3761 / NBRC 0622 / NRRL Y-65 / CBS 138) (Yeast)).